Here is a 258-residue protein sequence, read N- to C-terminus: Allene oxide cyclase 3, chloroplastic (258 aa).

A chloroplast-targeting transit peptide spans 1-56; the sequence is MASSSAAMSLESISMTTLNNLSRNHQSHRSSLLGFSRSFQNLGISSNGPDFSSRSR.

This sequence belongs to the allene oxide cyclase family. As to expression, highly expressed in fully developed leaves.

The protein localises to the plastid. It is found in the chloroplast. It carries out the reaction (9Z,13S,15Z)-12,13-epoxyoctadeca-9,11,15-trienoate = (9S,13S,15Z)-12-oxophyto-10,15-dienoate. Involved in the production of 12-oxo-phytodienoic acid (OPDA), a precursor of jasmonic acid. This is Allene oxide cyclase 3, chloroplastic (AOC3) from Arabidopsis thaliana (Mouse-ear cress).